Reading from the N-terminus, the 90-residue chain is Probable Fe(2+)-trafficking protein (90 aa).

Belongs to the Fe(2+)-trafficking protein family.

Could be a mediator in iron transactions between iron acquisition and iron-requiring processes, such as synthesis and/or repair of Fe-S clusters in biosynthetic enzymes. The protein is Probable Fe(2+)-trafficking protein of Acidovorax ebreus (strain TPSY) (Diaphorobacter sp. (strain TPSY)).